The following is a 492-amino-acid chain: RNase aCSPSF2 (492 aa).

His-130, His-132, Asp-134, His-135, His-213, Asp-234, and His-460 together coordinate a divalent metal cation.

Belongs to the metallo-beta-lactamase superfamily. RNA-metabolizing metallo-beta-lactamase-like family. It depends on Mg(2+) as a cofactor.

Its function is as follows. A 5'-3' exoribonuclease, more active on 5'-monophosphorylated and 5'-hydroxylated RNA than 5'-tri-phosphorylated RNA; note there is no evidence for accumulation of 5'-monophosphorylated RNA in this organism. Translation initiation factor 2 subunit gamma but not subunit alpha protects 5'-tri-phosphorylated RNA from degradation by this enzyme. The polypeptide is RNase aCSPSF2 (Saccharolobus solfataricus (strain ATCC 35092 / DSM 1617 / JCM 11322 / P2) (Sulfolobus solfataricus)).